Consider the following 611-residue polypeptide: Conglutin beta 1 (611 aa).

An N-terminal signal peptide occupies residues 1–30 (MAKMRVRLPMLILLLGVVFLLAASIGIAYG). 2 stretches are compositionally biased toward basic and acidic residues: residues 32–82 (KDFT…RSQS) and 130–141 (SRREEREEREQE). 2 disordered regions span residues 32-194 (KDFT…NRFQ) and 384-407 (LRKHAQSSSGEGKPSESGPFNLRS). Residues 142–151 (QGSSSGSQRG) show a composition bias toward low complexity. Positions 152 to 181 (SGDERRQHRERRVHREEREQEQDSRSDSRR) are enriched in basic and acidic residues. In terms of domain architecture, Cupin type-1 1 spans 186–344 (YHFSSNRFQT…TFNTRYEEIE (159 aa)). A compositionally biased stretch (low complexity) spans 390-402 (SSSGEGKPSESGP). The Cupin type-1 2 domain maps to 403 to 569 (FNLRSNKPIY…TFPGSIEDVE (167 aa)). Residue asparagine 434 is glycosylated (N-linked (GlcNAc...) asparagine). Residues 476–495 (DQQRQQDEQEEEYEQGEEEV) form a disordered region. Positions 483–492 (EQEEEYEQGE) are enriched in acidic residues. Asparagine 519 carries N-linked (GlcNAc...) asparagine glycosylation. The span at 580-589 (FANAQPQQQQ) shows a compositional bias: low complexity. The tract at residues 580 to 600 (FANAQPQQQQQREKEGRRGRR) is disordered.

The protein belongs to the 7S seed storage protein family. Component of globulins complexes which accumulate in seeds.

Seed storage protein. Accumulates during seed development and is hydrolyzed after germination to provide a carbon and nitrogen source for the developing seedling. The sequence is that of Conglutin beta 1 from Lupinus angustifolius (Narrow-leaved blue lupine).